Consider the following 382-residue polypeptide: MKLKPNDIYIPLNSIQFKIHHNDINIKYDTEEDNNNNNNNNNNNRYIDDNEKMKISEDESIFKSINNDNKNQQNDNIINSFNRGSNSFLFNIINFYKSPRFLSGGAVLLYVMTTYDFSASNFLLFNQMVVTIVILHILKHFNILKINTNFEKETIKKLMPLSFCYIINVLLGLDSLKQLNIPMYSALKRLVAVVILVMEYFILKKVSPPKIIASVVVMVIGAVVAGITDLSFNSLGYSLVLLSCIFQASYLIYVKKVASNMSTYDMLYYNSVLSLPITIFLMIVNQEIEYFQTFEHLYDSSFQAYFILSIFLGFFLNFCIFFCTSVNSPLTTSVTGQVKNIASTIIGAMVFNDIIIHPINILGLIINIIGSIWYSFLKLTSK.

The next 7 membrane-spanning stretches (helical) occupy residues 117 to 137 (FSASNFLLFNQMVVTIVILHI), 183 to 203 (MYSALKRLVAVVILVMEYFIL), 211 to 231 (IIASVVVMVIGAVVAGITDLS), 234 to 254 (SLGYSLVLLSCIFQASYLIYV), 264 to 284 (YDMLYYNSVLSLPITIFLMIV), 302 to 322 (FQAYFILSIFLGFFLNFCIFF), and 354 to 374 (IIIHPINILGLIINIIGSIWY).

The protein belongs to the TPT transporter family. SLC35D subfamily.

The protein localises to the membrane. Functionally, may be nvolved in the import of UDP-sugars. The protein is Putative UDP-sugar transporter DDB_G0278631 of Dictyostelium discoideum (Social amoeba).